Consider the following 209-residue polypeptide: Methylthioribulose-1-phosphate dehydratase (209 aa).

2 residues coordinate Zn(2+): histidine 99 and histidine 101.

This sequence belongs to the aldolase class II family. MtnB subfamily. Zn(2+) is required as a cofactor.

The enzyme catalyses 5-(methylsulfanyl)-D-ribulose 1-phosphate = 5-methylsulfanyl-2,3-dioxopentyl phosphate + H2O. The protein operates within amino-acid biosynthesis; L-methionine biosynthesis via salvage pathway; L-methionine from S-methyl-5-thio-alpha-D-ribose 1-phosphate: step 2/6. In terms of biological role, catalyzes the dehydration of methylthioribulose-1-phosphate (MTRu-1-P) into 2,3-diketo-5-methylthiopentyl-1-phosphate (DK-MTP-1-P). The polypeptide is Methylthioribulose-1-phosphate dehydratase (Leptospira biflexa serovar Patoc (strain Patoc 1 / Ames)).